The sequence spans 367 residues: UDP-N-acetylglucosamine--N-acetylmuramyl-(pentapeptide) pyrophosphoryl-undecaprenol N-acetylglucosamine transferase (367 aa).

Residues Thr15–Gly17, Asn127, Arg163, Ser191, Ile249, and Gln294 contribute to the UDP-N-acetyl-alpha-D-glucosamine site.

This sequence belongs to the glycosyltransferase 28 family. MurG subfamily.

The protein resides in the cell inner membrane. It catalyses the reaction di-trans,octa-cis-undecaprenyl diphospho-N-acetyl-alpha-D-muramoyl-L-alanyl-D-glutamyl-meso-2,6-diaminopimeloyl-D-alanyl-D-alanine + UDP-N-acetyl-alpha-D-glucosamine = di-trans,octa-cis-undecaprenyl diphospho-[N-acetyl-alpha-D-glucosaminyl-(1-&gt;4)]-N-acetyl-alpha-D-muramoyl-L-alanyl-D-glutamyl-meso-2,6-diaminopimeloyl-D-alanyl-D-alanine + UDP + H(+). It functions in the pathway cell wall biogenesis; peptidoglycan biosynthesis. Its function is as follows. Cell wall formation. Catalyzes the transfer of a GlcNAc subunit on undecaprenyl-pyrophosphoryl-MurNAc-pentapeptide (lipid intermediate I) to form undecaprenyl-pyrophosphoryl-MurNAc-(pentapeptide)GlcNAc (lipid intermediate II). The chain is UDP-N-acetylglucosamine--N-acetylmuramyl-(pentapeptide) pyrophosphoryl-undecaprenol N-acetylglucosamine transferase from Burkholderia ambifaria (strain MC40-6).